Reading from the N-terminus, the 265-residue chain is Nitrogenase iron protein 2 (265 aa).

ATP is bound at residue 8-15 (GKGGIGKS). Cys-91 serves as a coordination point for [4Fe-4S] cluster. At Arg-94 the chain carries ADP-ribosylarginine; by dinitrogenase reductase ADP-ribosyltransferase. Residue Cys-126 coordinates [4Fe-4S] cluster.

It belongs to the NifH/BchL/ChlL family. As to quaternary structure, homodimer. Requires [4Fe-4S] cluster as cofactor. Post-translationally, the reversible ADP-ribosylation of Arg-94 inactivates the nitrogenase reductase and regulates nitrogenase activity.

It catalyses the reaction N2 + 8 reduced [2Fe-2S]-[ferredoxin] + 16 ATP + 16 H2O = H2 + 8 oxidized [2Fe-2S]-[ferredoxin] + 2 NH4(+) + 16 ADP + 16 phosphate + 6 H(+). Its function is as follows. The key enzymatic reactions in nitrogen fixation are catalyzed by the nitrogenase complex, which has 2 components: the iron protein and the molybdenum-iron protein. The polypeptide is Nitrogenase iron protein 2 (nifH2) (Methanothermobacter thermautotrophicus (strain ATCC 29096 / DSM 1053 / JCM 10044 / NBRC 100330 / Delta H) (Methanobacterium thermoautotrophicum)).